Reading from the N-terminus, the 405-residue chain is L-rhamnonate dehydratase (405 aa).

The substrate site is built by His-33 and Arg-59. Positions 226, 252, and 280 each coordinate Mg(2+). His-329 (proton acceptor) is an active-site residue. Substrate is bound at residue Glu-349.

This sequence belongs to the mandelate racemase/muconate lactonizing enzyme family. RhamD subfamily. As to quaternary structure, homooctamer; tetramer of dimers. The cofactor is Mg(2+).

It carries out the reaction L-rhamnonate = 2-dehydro-3-deoxy-L-rhamnonate + H2O. Functionally, catalyzes the dehydration of L-rhamnonate to 2-keto-3-deoxy-L-rhamnonate (KDR). This is L-rhamnonate dehydratase from Escherichia coli O127:H6 (strain E2348/69 / EPEC).